The sequence spans 187 residues: uncharacterized protein (187 aa).

The disordered stretch occupies residues 42-63 (RTNGPGKDSFSFSTSGSKPSSS). Over residues 50–63 (SFSFSTSGSKPSSS) the composition is skewed to low complexity.

This is an uncharacterized protein from Saccharomyces cerevisiae (strain ATCC 204508 / S288c) (Baker's yeast).